The primary structure comprises 197 residues: Small ribosomal subunit protein uS4B (197 aa).

The S4 RNA-binding domain occupies 88 to 150 (SRLDNMVYRM…SRKTEMFVNN (63 aa)).

The protein belongs to the universal ribosomal protein uS4 family. As to quaternary structure, part of the 30S ribosomal subunit. Contacts protein S5. The interaction surface between S4 and S5 is involved in control of translational fidelity.

Functionally, one of the primary rRNA binding proteins, it binds directly to 16S rRNA where it nucleates assembly of the body of the 30S subunit. Its function is as follows. With S5 and S12 plays an important role in translational accuracy. The protein is Small ribosomal subunit protein uS4B of Clostridium perfringens (strain ATCC 13124 / DSM 756 / JCM 1290 / NCIMB 6125 / NCTC 8237 / Type A).